Consider the following 101-residue polypeptide: Small integral membrane protein 14 (101 aa).

Basic and acidic residues predominate over residues 71 to 81 (SDRRTADDAAI). Positions 71–101 (SDRRTADDAAIEKPTGSSDDNTPPPPPPSAM) are disordered. The segment covering 92-101 (TPPPPPPSAM) has biased composition (pro residues).

This chain is Small integral membrane protein 14, found in Caenorhabditis elegans.